A 147-amino-acid chain; its full sequence is Hemoglobin subunit epsilon (147 aa).

Positions 3-147 constitute a Globin domain; sequence HFTAEEKAAI…VAIALGHKYH (145 aa). 2 positions are modified to phosphoserine: Ser-14 and Ser-51. Residues His-64 and His-93 each coordinate heme b.

The protein belongs to the globin family. Heterotetramer of two alpha chains and two epsilon chains in early embryonic hemoglobin Gower-2; two zeta chains and two epsilon chains in early embryonic hemoglobin Gower-1. As to expression, red blood cells.

The epsilon chain is a beta-type chain of early mammalian embryonic hemoglobin. The sequence is that of Hemoglobin subunit epsilon (HBE1) from Leontopithecus rosalia (Golden lion tamarin).